The sequence spans 158 residues: 18.2 kDa class I heat shock protein (158 aa).

The 115-residue stretch at 44-158 (ENSAFVSTRV…PEVKTIDISG (115 aa)) folds into the sHSP domain.

The protein belongs to the small heat shock protein (HSP20) family. As to quaternary structure, forms oligomeric structures.

Its subcellular location is the cytoplasm. The sequence is that of 18.2 kDa class I heat shock protein (HSP18.2) from Medicago sativa (Alfalfa).